Reading from the N-terminus, the 956-residue chain is GAS2-like protein 2B (956 aa).

The Calponin-homology (CH) domain occupies 23–150; it reads YAMKEDLAEW…CLLELARRAS (128 aa). One can recognise a GAR domain in the interval 191-263; it reads CDFKNLDQMV…HYLDKHDPCH (73 aa). Composition is skewed to polar residues over residues 332–353 and 381–390; these read SSSY…QTPP and DPQQLGNPQS. Disordered stretches follow at residues 332–361, 378–406, 853–885, and 914–956; these read SSSY…SMSI, DTQD…ASQL, RPKI…SRNN, and VNSE…ESWV. A compositionally biased stretch (basic and acidic residues) spans 859-868; it reads RRDNRPEKKP.

Belongs to the GAS2 family.

It localises to the cytoplasm. It is found in the cytoskeleton. Its subcellular location is the cilium basal body. Together with gas2l2.L, regulates ciliary orientation and performance. The sequence is that of GAS2-like protein 2B from Xenopus laevis (African clawed frog).